Consider the following 393-residue polypeptide: Matrix metalloproteinase-23 (393 aa).

At 1–20 the chain is on the cytoplasmic side; sequence MGRGACVPSAASGAGDRARQ. Positions 1–81 are excised as a propeptide; it reads MGRGACVPSA…PHPPVPRRRR (81 aa). A helical; Signal-anchor for type II membrane protein transmembrane segment spans residues 21 to 41; the sequence is LGAVLGALCLFPALVLLAWPG. Topologically, residues 42–393 are lumenal; it reads TPANGAGARV…TYSWRIRVRS (352 aa). The segment at 60–79 is disordered; sequence TSGVLASGSLGPPHPPVPRR. 2 N-linked (GlcNAc...) asparagine glycosylation sites follow: Asn-95 and Asn-151. His-214 contributes to the Zn(2+) binding site. Residue Glu-215 is part of the active site. Zn(2+)-binding residues include His-218 and His-224. Residue Asn-235 is glycosylated (N-linked (GlcNAc...) asparagine). In terms of domain architecture, ShKT spans 258–292; it reads CLDRLFVCASWARRGFCDTRRRLMKRLCPSSCDFC. Cystine bridges form between Cys-258/Cys-292, Cys-265/Cys-285, and Cys-274/Cys-289. Residues 298 to 383 enclose the Ig-like C2-type domain; the sequence is PTVAATPPPP…VVRRRQRVLS (86 aa). Residue Asn-319 is glycosylated (N-linked (GlcNAc...) asparagine). Cys-324 and Cys-373 form a disulfide bridge.

Belongs to the peptidase M10A family. Zn(2+) is required as a cofactor. Post-translationally, N-glycosylated. Proteolytic cleavage might yield an active form.

It localises to the membrane. The protein resides in the endoplasmic reticulum membrane. Functionally, protease. May regulate the surface expression of some potassium channels by retaining them in the endoplasmic reticulum. The protein is Matrix metalloproteinase-23 (MMP23) of Bos taurus (Bovine).